A 292-amino-acid polypeptide reads, in one-letter code: Forkhead box protein R1 (292 aa).

2 disordered regions span residues 31-50 and 65-166; these read PPKLPLEKKPNPDKDGPDYE and PGKL…ASSQ. Composition is skewed to basic and acidic residues over residues 35–47 and 70–79; these read PLEKKPNPDKDGP and VSGRRKREDL. Positions 80 to 89 are enriched in polar residues; it reads TSTLPSSQPP. Residues 129 to 140 show a composition bias toward acidic residues; sequence LTEEEEAEDQED. Residues 149–161 are compositionally biased toward basic residues; that stretch reads PHKRAPLQSRRLR. A DNA-binding region (fork-head) is located at residues 173-272; the sequence is RPPLNYFHLI…EEARALASTR (100 aa).

Expressed in testis (at protein level).

It localises to the nucleus. The protein resides in the cytoplasm. The protein localises to the perinuclear region. Its function is as follows. Transcription factor which acts as both an activator and a repressor. Activates transcription of a number of genes including the heat shock chaperones HSPA1A and HSPA6 and the antioxidant NADPH-dependent reductase DHRS2 which are involved in protection against oxidative stress. Required for normal brain development. The chain is Forkhead box protein R1 (FOXR1) from Homo sapiens (Human).